We begin with the raw amino-acid sequence, 288 residues long: Protoheme IX farnesyltransferase (288 aa).

The next 9 membrane-spanning stretches (helical) occupy residues 6-26 (VILY…LLSL), 44-64 (FLDS…NNVI), 89-109 (LAIL…VKFI), 111-131 (VVCF…YSFF), 138-158 (ISTI…YCSV), 169-189 (LLIM…ILHF), 213-233 (IILH…INSI), 238-258 (LIIS…ELTI), and 268-288 (IFRW…FGFV).

Belongs to the UbiA prenyltransferase family. Protoheme IX farnesyltransferase subfamily.

It is found in the cell membrane. The enzyme catalyses heme b + (2E,6E)-farnesyl diphosphate + H2O = Fe(II)-heme o + diphosphate. The protein operates within porphyrin-containing compound metabolism; heme O biosynthesis; heme O from protoheme: step 1/1. In terms of biological role, converts heme B (protoheme IX) to heme O by substitution of the vinyl group on carbon 2 of heme B porphyrin ring with a hydroxyethyl farnesyl side group. In Buchnera aphidicola subsp. Baizongia pistaciae (strain Bp), this protein is Protoheme IX farnesyltransferase.